Here is a 130-residue protein sequence, read N- to C-terminus: Large ribosomal subunit protein bL21 (130 aa).

Residues 110–130 (TAPTATEETADATPDTETAAE) are disordered.

Belongs to the bacterial ribosomal protein bL21 family. As to quaternary structure, part of the 50S ribosomal subunit. Contacts protein L20.

Its function is as follows. This protein binds to 23S rRNA in the presence of protein L20. The sequence is that of Large ribosomal subunit protein bL21 from Nostoc sp. (strain PCC 7120 / SAG 25.82 / UTEX 2576).